Reading from the N-terminus, the 129-residue chain is Iron-sulfur cluster assembly 1 homolog, mitochondrial (129 aa).

Residues 1–12 constitute a mitochondrion transit peptide; that stretch reads MASSVVRATVRA. Residues Cys-57, Cys-121, and Cys-123 each contribute to the Fe cation site.

The protein belongs to the HesB/IscA family.

The protein localises to the mitochondrion. Involved in the maturation of mitochondrial 4Fe-4S proteins functioning late in the iron-sulfur cluster assembly pathway. Probably involved in the binding of an intermediate of Fe/S cluster assembly. The chain is Iron-sulfur cluster assembly 1 homolog, mitochondrial (ISCA1) from Gallus gallus (Chicken).